Consider the following 193-residue polypeptide: Xanthine phosphoribosyltransferase (193 aa).

2 residues coordinate xanthine: Leu-20 and Thr-27. 128 to 132 (ANGQA) provides a ligand contact to 5-phospho-alpha-D-ribose 1-diphosphate. Residue Lys-156 coordinates xanthine.

The protein belongs to the purine/pyrimidine phosphoribosyltransferase family. Xpt subfamily. Homodimer.

Its subcellular location is the cytoplasm. It carries out the reaction XMP + diphosphate = xanthine + 5-phospho-alpha-D-ribose 1-diphosphate. The protein operates within purine metabolism; XMP biosynthesis via salvage pathway; XMP from xanthine: step 1/1. Converts the preformed base xanthine, a product of nucleic acid breakdown, to xanthosine 5'-monophosphate (XMP), so it can be reused for RNA or DNA synthesis. The protein is Xanthine phosphoribosyltransferase of Streptococcus gordonii (strain Challis / ATCC 35105 / BCRC 15272 / CH1 / DL1 / V288).